We begin with the raw amino-acid sequence, 161 residues long: Cyclic pyranopterin monophosphate synthase (161 aa).

Residues 75–77 (LCH) and 113–114 (ME) each bind substrate. Aspartate 128 is a catalytic residue.

It belongs to the MoaC family. In terms of assembly, homohexamer; trimer of dimers.

It carries out the reaction (8S)-3',8-cyclo-7,8-dihydroguanosine 5'-triphosphate = cyclic pyranopterin phosphate + diphosphate. It participates in cofactor biosynthesis; molybdopterin biosynthesis. In terms of biological role, catalyzes the conversion of (8S)-3',8-cyclo-7,8-dihydroguanosine 5'-triphosphate to cyclic pyranopterin monophosphate (cPMP). In Methylobacillus flagellatus (strain ATCC 51484 / DSM 6875 / VKM B-1610 / KT), this protein is Cyclic pyranopterin monophosphate synthase.